A 375-amino-acid chain; its full sequence is Glutamate 5-kinase (375 aa).

Lysine 17 is an ATP binding site. Positions 57, 144, and 156 each coordinate substrate. 176-177 (TD) lines the ATP pocket. Positions 283–361 (KGRLWLDTGA…HQIEQILGYV (79 aa)) constitute a PUA domain.

It belongs to the glutamate 5-kinase family.

The protein resides in the cytoplasm. It catalyses the reaction L-glutamate + ATP = L-glutamyl 5-phosphate + ADP. It participates in amino-acid biosynthesis; L-proline biosynthesis; L-glutamate 5-semialdehyde from L-glutamate: step 1/2. Its function is as follows. Catalyzes the transfer of a phosphate group to glutamate to form L-glutamate 5-phosphate. The polypeptide is Glutamate 5-kinase (Nitrosococcus oceani (strain ATCC 19707 / BCRC 17464 / JCM 30415 / NCIMB 11848 / C-107)).